A 180-amino-acid chain; its full sequence is FMN reductase (NADH) RutF (180 aa).

This sequence belongs to the non-flavoprotein flavin reductase family. RutF subfamily.

It carries out the reaction FMNH2 + NAD(+) = FMN + NADH + 2 H(+). Catalyzes the reduction of FMN to FMNH2 which is used to reduce pyrimidine by RutA via the Rut pathway. The polypeptide is FMN reductase (NADH) RutF (Variovorax paradoxus (strain S110)).